Consider the following 416-residue polypeptide: Enolase (416 aa).

Gln-160 contacts (2R)-2-phosphoglycerate. Catalysis depends on Glu-204, which acts as the Proton donor. The Mg(2+) site is built by Asp-239, Glu-282, and Asp-308. (2R)-2-phosphoglycerate-binding residues include Lys-333, Arg-362, Ser-363, and Lys-384. Lys-333 (proton acceptor) is an active-site residue.

This sequence belongs to the enolase family. The cofactor is Mg(2+).

It localises to the cytoplasm. The protein localises to the secreted. Its subcellular location is the cell surface. The enzyme catalyses (2R)-2-phosphoglycerate = phosphoenolpyruvate + H2O. The protein operates within carbohydrate degradation; glycolysis; pyruvate from D-glyceraldehyde 3-phosphate: step 4/5. Functionally, catalyzes the reversible conversion of 2-phosphoglycerate (2-PG) into phosphoenolpyruvate (PEP). It is essential for the degradation of carbohydrates via glycolysis. This is Enolase from Metallosphaera sedula (strain ATCC 51363 / DSM 5348 / JCM 9185 / NBRC 15509 / TH2).